The sequence spans 347 residues: NADH-ubiquinone oxidoreductase chain 2 (347 aa).

10 consecutive transmembrane segments (helical) span residues P3–S23, H25–M45, Y59–M79, F111–L131, I149–G169, I178–P198, T201–L221, S242–P262, N274–L294, and L325–I345.

This sequence belongs to the complex I subunit 2 family. In terms of assembly, core subunit of respiratory chain NADH dehydrogenase (Complex I) which is composed of 45 different subunits. Interacts with TMEM242.

The protein resides in the mitochondrion inner membrane. It catalyses the reaction a ubiquinone + NADH + 5 H(+)(in) = a ubiquinol + NAD(+) + 4 H(+)(out). In terms of biological role, core subunit of the mitochondrial membrane respiratory chain NADH dehydrogenase (Complex I) which catalyzes electron transfer from NADH through the respiratory chain, using ubiquinone as an electron acceptor. Essential for the catalytic activity and assembly of complex I. This chain is NADH-ubiquinone oxidoreductase chain 2, found in Rhinoceros unicornis (Greater Indian rhinoceros).